Consider the following 379-residue polypeptide: Wnt inhibitory factor 1 (379 aa).

The N-terminal stretch at 1–28 is a signal peptide; the sequence is MARRRAFPAFALRLWSILPCLLLLRADA. Positions 38–177 constitute a WIF domain; the sequence is LWIDAHQARV…PQNAIFFKTC (140 aa). N88 carries N-linked (GlcNAc...) asparagine glycosylation. 7 cysteine pairs are disulfide-bonded: C140–C177, C182–C192, C186–C198, C200–C209, C214–C224, C218–C230, and C232–C241. 5 consecutive EGF-like domains span residues 178 to 210, 211 to 242, 243 to 271, 274 to 306, and 307 to 338; these read QQAE…PHCE, KALC…VNCD, KANC…LEGE, ELSK…DLCS, and KPVC…RHCN. N245 is a glycosylation site (N-linked (GlcNAc...) asparagine). Disulfide bonds link C246-C256, C250-C262, C278-C288, C282-C294, C296-C305, C310-C320, C314-C326, and C328-C337. The segment at 348–379 is disordered; that stretch reads APRPAGAGLERHTPSLKKAEDRRDPPESNYIW. A compositionally biased stretch (basic and acidic residues) spans 356–373; it reads LERHTPSLKKAEDRRDPP.

In terms of assembly, interacts with MYOC. Expression highest in heart and lung. Lower in brain and eye.

The protein resides in the secreted. Its function is as follows. Binds to WNT proteins and inhibits their activities. May be involved in mesoderm segmentation. The chain is Wnt inhibitory factor 1 (Wif1) from Mus musculus (Mouse).